Reading from the N-terminus, the 185-residue chain is Ribosome-recycling factor (185 aa).

This sequence belongs to the RRF family.

Its subcellular location is the cytoplasm. Functionally, responsible for the release of ribosomes from messenger RNA at the termination of protein biosynthesis. May increase the efficiency of translation by recycling ribosomes from one round of translation to another. The protein is Ribosome-recycling factor of Thermus thermophilus (strain ATCC BAA-163 / DSM 7039 / HB27).